Here is a 264-residue protein sequence, read N- to C-terminus: Signal peptidase I (264 aa).

Topologically, residues 1–18 (MNRDNTKTNKTVKQEFAS) are cytoplasmic. A helical membrane pass occupies residues 19–39 (FTFVICIALVIRILIMEPFTV). Over 40–264 (PTGSMKATIL…IFKNLYNVDE (225 aa)) the chain is Periplasmic. Active-site residues include Ser-43 and Lys-106.

The protein belongs to the peptidase S26 family.

It localises to the cell inner membrane. The catalysed reaction is Cleavage of hydrophobic, N-terminal signal or leader sequences from secreted and periplasmic proteins.. Complements E.coli mutants temperature-sensitive for LepB function. This is Signal peptidase I (lepB) from Rickettsia typhi (strain ATCC VR-144 / Wilmington).